A 140-amino-acid chain; its full sequence is Endoribonuclease YbeY (140 aa).

Residues H101, H105, and H111 each contribute to the Zn(2+) site.

Belongs to the endoribonuclease YbeY family. The cofactor is Zn(2+).

It localises to the cytoplasm. Single strand-specific metallo-endoribonuclease involved in late-stage 70S ribosome quality control and in maturation of the 3' terminus of the 16S rRNA. This is Endoribonuclease YbeY from Aliarcobacter butzleri (strain RM4018) (Arcobacter butzleri).